A 731-amino-acid chain; its full sequence is MVVEHPEFLKAGKEPGLQIWRVEKFDLVPVPPNLYGDFFTGDAYVILKTVQLRNGILQYDLHYWLGNECSQDESGAAAIFTVQLDDYLNGRAVQHREVQGFESATFLGYFKSGLKYKKGGVASGFKHVVPNEVVVQRLLQVKGRRVVRATEVPVSWESFNNGDCFILDLGNNIYQWCGSKSNRFERLKATQVSKGIRDNERSGRAQVSVFEEGAEPEAMLQVLGPKPTLPEATEDTVKEDAANRKLAKLYKVSNGAGPMVVSLVADENPFAQGALRSEDCFILDHGKDGKIFVWKGKQANMEERKAALKTASDFISKMDYPKQTQVSVLPEGGETPLFRQFFKNWRDPDQTEGLGLAYLSSHIAHVERVPFDAATLHTSTAMAAQHGMDDDGTGQKQIWRVEGSNKVPVDPATYGQFYGGDSYIILYNYRHGSRQGQIIYNWQGAQSTQDEVAASAILTAQLDEELGGTPVQSRVVQGKEPAHLMSLFGGKPMIVYKGGTSREGGQTAPASTRLFQVRASSSGATRAVEIIPKAGALNSNDAFVLKTPSAAYLWVGAGASEAEKTGAQELLRVLRAQPVQVAEGSEPDSFWEALGGKATYRTSPRLKDKKMDAHPPRLFACSNKIGRFVIEEVPGEFMQEDLATDDVMLLDTWDQVFVWVGKDSQDEEKTEALTSAKRYIDTDPAHRDRRTPITVVKQGFEPPSFVGWFLGWDDSYWSVDPLDRALAELAA.

The actin-severing stretch occupies residues 2–125 (VVEHPEFLKA…YKKGGVASGF (124 aa)). The stretch at 25–107 (FDLVPVPPNL…VQGFESATFL (83 aa)) is one Gelsolin-like 1 repeat. A Phosphotyrosine modification is found at tyrosine 35. Positions 41, 42, 73, 85, 90, and 92 each coordinate Ca(2+). The actin-actin interfilament contact point stretch occupies residues 72–75 (DESG). An a 1,2-diacyl-sn-glycero-3-phospho-(1D-myo-inositol-4,5-bisphosphate)-binding site is contributed by 111-118 (KSGLKYKK). Position 121 (valine 121) interacts with Ca(2+). 137–145 (RLLQVKGRR) contributes to the a 1,2-diacyl-sn-glycero-3-phospho-(1D-myo-inositol-4,5-bisphosphate) binding site. The Gelsolin-like 2 repeat unit spans residues 147-219 (VRATEVPVSW…FEEGAEPEAM (73 aa)). Positions 162 and 163 each coordinate Ca(2+). A disulfide bridge links cysteine 164 with cysteine 177. Residues glutamate 185, aspartate 235, glutamate 278, aspartate 279, and glutamate 303 each contribute to the Ca(2+) site. A Gelsolin-like 3 repeat occupies 266–338 (DENPFAQGAL…LPEGGETPLF (73 aa)). 2 positions are modified to phosphotyrosine: tyrosine 358 and tyrosine 414. The segment at 383–731 (AAQHGMDDDG…LDRALAELAA (349 aa)) is actin-binding, Ca-sensitive. One copy of the Gelsolin-like 4 repeat lies at 404 to 485 (SNKVPVDPAT…VQGKEPAHLM (82 aa)). Glycine 420, aspartate 421, glutamate 451, aspartate 463, glycine 468, proline 470, and threonine 500 together coordinate Ca(2+). Position 533 is an N6-acetyllysine (lysine 533). One copy of the Gelsolin-like 5 repeat lies at 533–591 (KAGALNSNDAFVLKTPSAAYLWVGAGASEAEKTGAQELLRVLRAQPVQVAEGSEPDSFW). Asparagine 540 and aspartate 541 together coordinate Ca(2+). Phosphotyrosine is present on tyrosine 552. Glutamate 563 is a Ca(2+) binding site. At tyrosine 600 the chain carries Phosphotyrosine. The stretch at 630-705 (IEEVPGEFMQ…VKQGFEPPSF (76 aa)) is one Gelsolin-like 6 repeat. Residues aspartate 645, aspartate 646, and glutamate 668 each coordinate Ca(2+). Threonine 691 bears the Phosphothreonine mark.

The protein belongs to the villin/gelsolin family. As to quaternary structure, binds to actin and to fibronectin. Identified in a complex composed of ACTA1, COBL, GSN and TMSB4X. Interacts with the inactive form of EIF2AK2/PKR. Interacts with FLII.

The protein resides in the cytoplasm. Its subcellular location is the cytoskeleton. Its function is as follows. Calcium-regulated, actin-modulating protein that binds to the plus (or barbed) ends of actin monomers or filaments, preventing monomer exchange (end-blocking or capping). It can promote the assembly of monomers into filaments (nucleation) as well as sever filaments already formed. Plays a role in ciliogenesis. This is Gelsolin (GSN) from Equus caballus (Horse).